The following is a 428-amino-acid chain: Serine--tRNA ligase (428 aa).

Position 235 to 237 (235 to 237 (TAE)) interacts with L-serine. 266-268 (RSE) provides a ligand contact to ATP. Glutamate 289 is a binding site for L-serine. Residue 353 to 356 (EISS) participates in ATP binding. Serine 389 serves as a coordination point for L-serine.

Belongs to the class-II aminoacyl-tRNA synthetase family. Type-1 seryl-tRNA synthetase subfamily. As to quaternary structure, homodimer. The tRNA molecule binds across the dimer.

Its subcellular location is the cytoplasm. The catalysed reaction is tRNA(Ser) + L-serine + ATP = L-seryl-tRNA(Ser) + AMP + diphosphate + H(+). It catalyses the reaction tRNA(Sec) + L-serine + ATP = L-seryl-tRNA(Sec) + AMP + diphosphate + H(+). It participates in aminoacyl-tRNA biosynthesis; selenocysteinyl-tRNA(Sec) biosynthesis; L-seryl-tRNA(Sec) from L-serine and tRNA(Sec): step 1/1. Catalyzes the attachment of serine to tRNA(Ser). Is also able to aminoacylate tRNA(Sec) with serine, to form the misacylated tRNA L-seryl-tRNA(Sec), which will be further converted into selenocysteinyl-tRNA(Sec). The protein is Serine--tRNA ligase of Shewanella baltica (strain OS185).